A 255-amino-acid polypeptide reads, in one-letter code: MSDYIVVKCGGSMLNQLNDVFFECIKKLQQKYKVVIVHGGGPEIDAKLKDCNINVEKRDGLRITPKEVMDVVQMVLCGSTNKKLVMNLQKHNLLAVGCSGCDGNLLQIQPVSEEIGYVGEVSYVETALLKGLINMEYIPVIAPIGVNGNEIYNINADNAAAGIAAALGAKELVFITDVDGILHEGNLVKETDESEIATFIETGVITGGMIPKVQAALASLKMGVQKISIVNGTKDFTEVTGECIGTTVTKGVSIA.

Substrate contacts are provided by residues 40–41 (GG), Arg-62, and Asn-153.

Belongs to the acetylglutamate kinase family. ArgB subfamily.

Its subcellular location is the cytoplasm. It catalyses the reaction N-acetyl-L-glutamate + ATP = N-acetyl-L-glutamyl 5-phosphate + ADP. It participates in amino-acid biosynthesis; L-arginine biosynthesis; N(2)-acetyl-L-ornithine from L-glutamate: step 2/4. Its function is as follows. Catalyzes the ATP-dependent phosphorylation of N-acetyl-L-glutamate. This is Acetylglutamate kinase from Bacillus cereus (strain ATCC 14579 / DSM 31 / CCUG 7414 / JCM 2152 / NBRC 15305 / NCIMB 9373 / NCTC 2599 / NRRL B-3711).